The following is an 834-amino-acid chain: MTTTSKIINDGEGEDVKGNKNINKKSLIDENRLDEKKDLLSDKVESKTHCSVKRMAVLTSGGDSSGMNPAIRAFARQVMLKGAKVFAVREGYNGLVNDSIVPLNWGSVAGIISRGGTIIGTARSAEFRTREGRKRAVFNLVKNRIDNLLVIGGDGSLTGANLLRTEWCSLLEELVKDGKLTLDVMEHFPILSIAGIVGSIDNDMCGTDLTVGADTATKRILEAIDSILSTAVSHQRSFVIEVMGRNCGWLALASGVATGADYILIPESPPDDGWEQTMADNLERGRLSGRRCSLVIVSEGAIDRQGKPITSAYVRQFLEDKGHDARITILGHVQRGGTPTFLDRYIATRMGIEAANYFYDSTIEQLKQPVLIGMSGMDTIRSPLMECVQKTQSIASLIKERRFNEVVDVRGGMFKEFYEIFIACSNLHRRKVESKGMGVLILHSGGPSPGMNPCVRAFTRLGIDHGYTMYGCFNGFGGLALGEIEQLHWMTVNGWSVMGGAELGTNRSIPNDSNIEAIIATLERFKINAILMFGGFNGYLGIAKLYEYREKYQQLKRISIIGAPGTIANNVPGTNISIGSDTSLNNTLDALDKIKQSAVASRRLFVVEVMGAHCGYLAAMSSLTSGAERSYIMERGITLNTLTKDLEMFVERFKREHRIGLIIKSELASNTYSTHFIYSLFKEEGKHLFDVRESILGHLQQGGTPSAIDRIFSTRLMNHYYQFLENDLKEHGHLQMNGCIGFIDGGIHYTPMQEMIEEMSDKFRRPRSQWWMDLVETSQNISVFPLDDPSSTNFEGCNSNLSEQDRPIKKSDISSPTSYSQKTFDPNVNPQFTL.

The tract at residues 1–426 (MTTTSKIIND…FYEIFIACSN (426 aa)) is N-terminal catalytic PFK domain 1. Residues Gly62, 123-124 (RS), and 153-156 (GDGS) contribute to the ATP site. Asp154 is a Mg(2+) binding site. Substrate is bound by residues 199 to 201 (SID), Arg236, 243 to 245 (MGR), Glu299, Arg326, and 332 to 335 (HVQR). The Proton acceptor role is filled by Asp201. The segment at 427 to 437 (LHRRKVESKGM) is interdomain linker. Positions 438–834 (GVLILHSGGP…DPNVNPQFTL (397 aa)) are C-terminal regulatory PFK domain 2. Residues Arg507, 566–570 (TIANN), Arg603, 610–612 (MGA), Glu666, Arg692, 698–701 (HLQQ), and Arg764 contribute to the beta-D-fructose 2,6-bisphosphate site. The disordered stretch occupies residues 799–834 (SNLSEQDRPIKKSDISSPTSYSQKTFDPNVNPQFTL). Residues 803-812 (EQDRPIKKSD) show a composition bias toward basic and acidic residues. The segment covering 813 to 834 (ISSPTSYSQKTFDPNVNPQFTL) has biased composition (polar residues).

It belongs to the phosphofructokinase type A (PFKA) family. ATP-dependent PFK group I subfamily. Eukaryotic two domain clade 'E' sub-subfamily. In terms of assembly, homotetramer. Mg(2+) is required as a cofactor. The N-terminus is blocked.

The protein localises to the cytoplasm. The catalysed reaction is beta-D-fructose 6-phosphate + ATP = beta-D-fructose 1,6-bisphosphate + ADP + H(+). The protein operates within carbohydrate degradation; glycolysis; D-glyceraldehyde 3-phosphate and glycerone phosphate from D-glucose: step 3/4. With respect to regulation, allosterically activated by ADP, AMP, or fructose 2,6-bisphosphate, and allosterically inhibited by ATP or citrate. Its function is as follows. Catalyzes the phosphorylation of D-fructose 6-phosphate to fructose 1,6-bisphosphate by ATP, the first committing step of glycolysis. This chain is ATP-dependent 6-phosphofructokinase (pfkA), found in Dictyostelium discoideum (Social amoeba).